The following is a 341-amino-acid chain: DNA-directed RNA polymerase subunit alpha (341 aa).

Residues M1–E233 form an alpha N-terminal domain (alpha-NTD) region. The interval I269–F341 is alpha C-terminal domain (alpha-CTD).

It belongs to the RNA polymerase alpha chain family. As to quaternary structure, in plastids the minimal PEP RNA polymerase catalytic core is composed of four subunits: alpha, beta, beta', and beta''. When a (nuclear-encoded) sigma factor is associated with the core the holoenzyme is formed, which can initiate transcription.

It is found in the plastid. The protein resides in the chloroplast. The enzyme catalyses RNA(n) + a ribonucleoside 5'-triphosphate = RNA(n+1) + diphosphate. Functionally, DNA-dependent RNA polymerase catalyzes the transcription of DNA into RNA using the four ribonucleoside triphosphates as substrates. The protein is DNA-directed RNA polymerase subunit alpha of Lolium perenne (Perennial ryegrass).